Here is a 308-residue protein sequence, read N- to C-terminus: Rhamnose-binding lectin (308 aa).

Positions 1–23 (MMLILKLSLLSLLIATPGLLVSG) are cleaved as a signal peptide. SUEL-type lectin domains follow at residues 27–115 (ITCY…SFDC), 123–213 (ICEH…YICT), and 218–308 (VCEG…YACV). Residue N110 is glycosylated (N-linked (GlcNAc...) asparagine).

In terms of assembly, homotrimer. In terms of tissue distribution, expressed in eggs, but not in liver.

The protein resides in the secreted. Functionally, lectin that binds L-rhamnose. Also binds monosaccharides possessing steric similarity to the hydroxyl group orientation at C2 and C4 of the pyranose ring structure of L-rhamnose, such as L-mannose and L-lyxose. This Silurus asotus (Amur catfish) protein is Rhamnose-binding lectin.